A 67-amino-acid polypeptide reads, in one-letter code: Sec-independent protein translocase protein TatA (67 aa).

The chain crosses the membrane as a helical span at residues 1–21 (MFGIGIQELLVVLVLVLLVFG). Residues 46-67 (PDEIDITPGKKNGKTDKDDKQA) form a disordered region. A compositionally biased stretch (basic and acidic residues) spans 58–67 (GKTDKDDKQA).

This sequence belongs to the TatA/E family. The Tat system comprises two distinct complexes: a TatABC complex, containing multiple copies of TatA, TatB and TatC subunits, and a separate TatA complex, containing only TatA subunits. Substrates initially bind to the TatABC complex, which probably triggers association of the separate TatA complex to form the active translocon.

The protein resides in the cell inner membrane. Functionally, part of the twin-arginine translocation (Tat) system that transports large folded proteins containing a characteristic twin-arginine motif in their signal peptide across membranes. TatA could form the protein-conducting channel of the Tat system. The chain is Sec-independent protein translocase protein TatA from Nitratidesulfovibrio vulgaris (strain DSM 19637 / Miyazaki F) (Desulfovibrio vulgaris).